A 390-amino-acid chain; its full sequence is Zinc finger protein 121 (390 aa).

Residues 88 to 110 (FEYSDCEEAFVDQSHLQANRITH) form a C2H2-type 1; degenerate zinc finger. The C2H2-type 2; degenerate zinc finger occupies 116–138 (YEQKQCGRAFTYSTSHAVSVKMH). 9 C2H2-type zinc fingers span residues 144-166 (YECK…MRTH), 172-194 (YECK…VRIH), 200-222 (YQCK…VRIH), 228-250 (YECN…FKTH), 256-278 (FECK…FRIH), 284-306 (YKCK…VKIH), 312-334 (YECK…IRTH), 340-362 (YICK…VRIH), and 368-390 (YICN…LKTH).

This sequence belongs to the krueppel C2H2-type zinc-finger protein family.

It localises to the nucleus. May be involved in transcriptional regulation. In Homo sapiens (Human), this protein is Zinc finger protein 121 (ZNF121).